A 568-amino-acid chain; its full sequence is Natural resistance-associated macrophage protein 2 (568 aa).

A compositionally biased stretch (basic and acidic residues) spans 1 to 20; sequence MVLDPEEKIPDDGASGDHGD. The tract at residues 1-45 is disordered; that stretch reads MVLDPEEKIPDDGASGDHGDSASLGAINPAYSNSSLPHSTGDSEE. The Cytoplasmic portion of the chain corresponds to 1 to 69; that stretch reads MVLDPEEKIP…EEYSCFSFRK (69 aa). A compositionally biased stretch (polar residues) spans 30 to 40; that stretch reads AYSNSSLPHST. The chain crosses the membrane as a helical span at residues 70–90; it reads LWAFTGPGFLMSIAYLDPGNI. At 91–95 the chain is on the extracellular side; the sequence is ESDLQ. The helical transmembrane segment at 96 to 117 threads the bilayer; sequence SGAVAGFKLLWVLLLATIVGLL. At 118 to 154 the chain is on the cytoplasmic side; it reads LQRLAARLGVVTGLHLAEVCHRQYPKVPRIILWLMVE. Residues 155–175 form a helical membrane-spanning segment; that stretch reads LAIIGSDMQEVIGSAIAINLL. Residues 176 to 179 are Extracellular-facing; the sequence is SAGR. The helical transmembrane segment at 180–194 threads the bilayer; sequence VPLYGGVLITIADTF. The Cytoplasmic segment spans residues 195–208; that stretch reads VFLFLDKYGLRKLE. Residues 209-229 traverse the membrane as a helical segment; the sequence is AFFGFLITIMALTFGYEYVTV. The Extracellular segment spans residues 230 to 255; sequence KPSQSQVLRGMFVPSCSGCHTPQVEQ. Residues 256-276 form a helical membrane-spanning segment; it reads AVGIVGAVIMPHNMYLHSALV. Over 277–301 the chain is Cytoplasmic; the sequence is KSRQVNRANKQEVREANKYFFIESC. A helical membrane pass occupies residues 302-322; the sequence is IALFVSFIINVFVVSVFAEAF. Residues 323 to 360 are Extracellular-facing; it reads FEKTNEQVVEVCRNSSSPHADLFPNDNSTLAVDIYKGG. N-linked (GlcNAc...) asparagine glycans are attached at residues Asn-336 and Asn-349. A helical transmembrane segment spans residues 361-381; the sequence is VVLGCYFGPAALYIWAVGILA. Residues 382-408 are Cytoplasmic-facing; sequence AGQSSTMTGTYSGQFVMEGFLNLKWSR. A helical transmembrane segment spans residues 409 to 429; the sequence is FARVILTRSIAIIPTLLVAVF. At 430-440 the chain is on the extracellular side; it reads QDVEHLTGMND. Residues 441 to 461 form a helical membrane-spanning segment; that stretch reads FLNVLQSLQLPFALIPILTFT. Topologically, residues 462–482 are cytoplasmic; sequence SLRPVMSEFSNGIGWRIAGGI. A helical membrane pass occupies residues 483–503; it reads LVLLVCSINMYFVVVYVQELG. The Extracellular portion of the chain corresponds to 504–506; that stretch reads HVA. Residues 507 to 527 form a helical membrane-spanning segment; it reads LYVVAAVVSVAYLGFVFYLGW. The Cytoplasmic portion of the chain corresponds to 528–568; that stretch reads QCLIALGLSFLDCGRSYHLGLTARPEIYLLNTVDAVSLVSR. The tract at residues 555–559 is required for early endosome targeting; it reads YLLNT. A phosphoserine mark is found at Leu-556, Ser-564, and Ser-567.

The protein belongs to the NRAMP family. As to quaternary structure, forms a complex with NDFIP1 and NEDD4L, in cortical neurons, in response to iron and cobalt exposure; this interaction leads to SLC11A2 ubiquitination by NEDD4L and proteasome-dependent degradation. Interacts with NDFIP1, NDFIP2 and WWP2; this interaction leads to SLC11A2 ubiquitination by WWP2 and subsequent proteasome-dependent degradation. Interacts with COX2 and TOM6 at the outer mitochondrion membrane. Interacts with ARRDC1; this interaction regulates the incorporation of SLC11A2 into extracellular vesicles through an ubiquitination-dependent mechanism. Interacts with ARRDC4; controls the incorporation of SLC11A2 into extracellular vesicles through an ubiquitination-dependent mechanism. In terms of processing, ubiquitinated by WWP2. N-glycosylated. Ubiquitous. As to expression, expressed in proximal intestine, kidney and brain.

Its subcellular location is the golgi apparatus. The protein resides in the trans-Golgi network membrane. The protein localises to the early endosome membrane. It localises to the recycling endosome membrane. It is found in the late endosome membrane. Its subcellular location is the lysosome membrane. The protein resides in the apical cell membrane. The protein localises to the mitochondrion outer membrane. It localises to the extracellular vesicle membrane. It catalyses the reaction Fe(2+)(in) + H(+)(in) = Fe(2+)(out) + H(+)(out). The catalysed reaction is Cd(2+)(out) + H(+)(out) = Cd(2+)(in) + H(+)(in). The enzyme catalyses Co(2+)(out) + H(+)(out) = Co(2+)(in) + H(+)(in). It carries out the reaction Mn(2+)(in) + H(+)(in) = Mn(2+)(out) + H(+)(out). It catalyses the reaction Zn(2+)(out) + H(+)(out) = Zn(2+)(in) + H(+)(in). The catalysed reaction is Ni(2+)(out) + H(+)(out) = Ni(2+)(in) + H(+)(in). The enzyme catalyses H(+)(in) = H(+)(out). It carries out the reaction Fe(2+)(in) = Fe(2+)(out). Inhibited by 2-(3-carbamimidoylsulfanylmethyl-benzyl)-isothiourea. Its function is as follows. Proton-coupled metal ion symporter operating with a proton to metal ion stoichiometry of 1:1. Selectively transports various divalent metal cations, in decreasing affinity: Cd(2+) &gt; Fe(2+) &gt; Co(2+), Mn(2+) &gt;&gt; Zn(2+), Ni(2+), VO(2+). Essential for maintenance of iron homeostasis by modulating intestinal absorption of dietary Fe(2+) and TF-associated endosomal Fe(2+) transport in erythroid precursors and other cells. Enables Fe(2+) and Mn(2+) ion entry into mitochondria, and is thus expected to promote mitochondrial heme synthesis, iron-sulfur cluster biogenesis and antioxidant defense. Can mediate uncoupled fluxes of either protons or metal ions. In Rattus norvegicus (Rat), this protein is Natural resistance-associated macrophage protein 2 (Slc11a2).